The following is a 140-amino-acid chain: Profilin-2 (140 aa).

A2 carries the post-translational modification N-acetylalanine.

Belongs to the profilin family. Occurs in many kinds of cells as a complex with monomeric actin in a 1:1 ratio. Interacts with PFN2. Interacts with ACTMAP (via N-terminus); the interaction may facilitate efficient cleavage of the acetylated N-terminus of immature actin by ACTMAP.

It is found in the cytoplasm. Its subcellular location is the cytoskeleton. Functionally, binds to actin and affects the structure of the cytoskeleton. At high concentrations, profilin prevents the polymerization of actin, whereas it enhances it at low concentrations. By binding to PIP2, it inhibits the formation of IP3 and DG. This Bos taurus (Bovine) protein is Profilin-2 (PFN2).